The primary structure comprises 106 residues: Immunity protein CdiI (106 aa).

Forms a contact-dependent growth inhibition complex of CdiA-CT-NC101, CdiI-NC101 and EF-Tu; the complex is a dimer of heterotrimers.

In terms of biological role, immunity protein component of a toxin-immunity protein module, which functions as a cellular contact-dependent growth inhibition (CDI) system. CDI modules allow bacteria to communicate with and inhibit the growth of closely related neighboring bacteria in a contact-dependent fashion. Neutralizes the toxic activity of cognate toxin CdiA-NC101 (the C-terminal 154 residue CT fragment). Does not inhibit toxic activity of CdiA from other toxin-immunity modules or strains of E.coli. Mediates dimerization of the ternary CdiA-CT-NC101, CdiI-NC101 and EF-Tu complex; both CdiI molecules contact both EF-Tu molecules. This Escherichia coli (strain NC101) protein is Immunity protein CdiI.